We begin with the raw amino-acid sequence, 34 residues long: MSDIN-like toxin proprotein 4 (34 aa).

Positions 1-10 (MSDINATRLP) are excised as a propeptide. Residues 11–17 (VWIGYSP) constitute a cross-link (cyclopeptide (Val-Pro)). The propeptide occupies 18–34 (CVGDDCIALLTRGEGLC).

Belongs to the MSDIN fungal toxin family. In terms of processing, processed by the macrocyclase-peptidase enzyme POPB to yield a toxic cyclic heptapeptide. POPB first removes 10 residues from the N-terminus. Conformational trapping of the remaining peptide forces the enzyme to release this intermediate rather than proceed to macrocyclization. The enzyme rebinds the remaining peptide in a different conformation and catalyzes macrocyclization of the N-terminal 7 residues. In terms of tissue distribution, expressed in basidiocarps.

Probable toxin that belongs to the MSDIN-like toxin family responsible for a large number of food poisoning cases and deaths. This Amanita exitialis (Guangzhou destroying angel) protein is MSDIN-like toxin proprotein 4.